Reading from the N-terminus, the 457-residue chain is Ribosomal protein uS12 methylthiotransferase RimO (457 aa).

The MTTase N-terminal domain maps to 6–116 (PKVGFVSLGC…VMEAVHAALP (111 aa)). 6 residues coordinate [4Fe-4S] cluster: Cys15, Cys51, Cys80, Cys147, Cys151, and Cys154. A Radical SAM core domain is found at 133–370 (LTPRHYAYLK…MARQAEISAA (238 aa)). One can recognise a TRAM domain in the interval 373 to 441 (EAKIGSVQQC…EHDLFGDALP (69 aa)).

This sequence belongs to the methylthiotransferase family. RimO subfamily. [4Fe-4S] cluster serves as cofactor.

It localises to the cytoplasm. It carries out the reaction L-aspartate(89)-[ribosomal protein uS12]-hydrogen + (sulfur carrier)-SH + AH2 + 2 S-adenosyl-L-methionine = 3-methylsulfanyl-L-aspartate(89)-[ribosomal protein uS12]-hydrogen + (sulfur carrier)-H + 5'-deoxyadenosine + L-methionine + A + S-adenosyl-L-homocysteine + 2 H(+). In terms of biological role, catalyzes the methylthiolation of an aspartic acid residue of ribosomal protein uS12. The sequence is that of Ribosomal protein uS12 methylthiotransferase RimO from Xanthomonas campestris pv. campestris (strain 8004).